Reading from the N-terminus, the 229-residue chain is Uracil-DNA glycosylase (229 aa).

Asp64 serves as the catalytic Proton acceptor.

The protein belongs to the uracil-DNA glycosylase (UDG) superfamily. UNG family.

The protein resides in the cytoplasm. The enzyme catalyses Hydrolyzes single-stranded DNA or mismatched double-stranded DNA and polynucleotides, releasing free uracil.. Its function is as follows. Excises uracil residues from the DNA which can arise as a result of misincorporation of dUMP residues by DNA polymerase or due to deamination of cytosine. This Geobacillus thermodenitrificans (strain NG80-2) protein is Uracil-DNA glycosylase.